Here is a 675-residue protein sequence, read N- to C-terminus: Transketolase, chloroplastic (675 aa).

Thiamine diphosphate is bound by residues H78 and G127–L129. A Mg(2+)-binding site is contributed by D168. Residues G169, E173, and N198 each coordinate thiamine diphosphate. Positions 198 and 200 each coordinate Mg(2+). Residue H275 coordinates thiamine diphosphate. 3 residues coordinate substrate: H275, R369, and S396. Thiamine diphosphate is bound by residues E423 and F450 to Y453. E423 serves as the catalytic Proton donor. H474, D482, and R533 together coordinate substrate.

In terms of assembly, homodimer. The cofactor is Mg(2+). Ca(2+) is required as a cofactor. Requires Mn(2+) as cofactor. Co(2+) serves as cofactor. It depends on thiamine diphosphate as a cofactor.

It localises to the plastid. The protein resides in the chloroplast thylakoid membrane. It catalyses the reaction D-sedoheptulose 7-phosphate + D-glyceraldehyde 3-phosphate = aldehydo-D-ribose 5-phosphate + D-xylulose 5-phosphate. It functions in the pathway carbohydrate biosynthesis; Calvin cycle. Its function is as follows. Catalyzes the reversible transfer of a two-carbon ketol group from fructose-6-phosphate or sedoheptulose-7-phosphate to glyceraldehyde-3-phosphate to yield xylulose-5-phosphate and erythrose-4-phosphate or ribose-5-phosphate, respectively. The protein is Transketolase, chloroplastic of Zea mays (Maize).